The following is a 56-amino-acid chain: UPF0391 membrane protein Noc_0484 (56 aa).

2 helical membrane-spanning segments follow: residues 6 to 26 and 29 to 49; these read VTFL…IAGI and EIAW…LVLG.

This sequence belongs to the UPF0391 family.

The protein localises to the cell membrane. The chain is UPF0391 membrane protein Noc_0484 from Nitrosococcus oceani (strain ATCC 19707 / BCRC 17464 / JCM 30415 / NCIMB 11848 / C-107).